The primary structure comprises 500 residues: Putative DNA recombinase (500 aa).

The Resolvase/invertase-type recombinase catalytic domain maps to 1–144 (MIAIYVRVST…SGRLQKMKKG (144 aa)). The active-site O-(5'-phospho-DNA)-serine intermediate is serine 9. The recombinase DNA-binding region spans 152-288 (LYGYKFVKEK…QELLGQSKRK (137 aa)). Residues 372-448 (KEAEQSNHLS…IQSKMKVLDD (77 aa)) are a coiled coil.

In the N-terminal section; belongs to the site-specific recombinase resolvase family.

Functionally, putative site-specific recombinase having a very important role in sporulation. It probably plays a role in the recombination of SpoIIIC and SpoIVCB to form sigma K factor. The protein is Putative DNA recombinase (cisA) of Bacillus subtilis (strain 168).